A 487-amino-acid chain; its full sequence is G-patch domain and KOW motifs-containing protein (487 aa).

3 disordered regions span residues 65 to 121 (HKNR…PLLM), 181 to 232 (VKPL…TGSA), and 295 to 367 (KVHQ…RPEP). The stretch at 88 to 116 (AVLSQAVKELIEESRRAQEDNSETNQTLS) forms a coiled coil. 2 stretches are compositionally biased toward basic and acidic residues: residues 96 to 106 (ELIEESRRAQE) and 200 to 209 (SALKHLEPQK). The G-patch domain maps to 154 to 200 (VQQYGMAMLRGMGWKEGEGIGRTFKQDVKPLEQKLRPKGLGLGADRS). Residues 226–253 (GLGTGSAVQIQSGAYKDMYGKVEGIDPD) form the KOW 1 domain. Basic and acidic residues-rich tracts occupy residues 295 to 333 (KVHQESKVEPHRDRTPEKEQGRKGGEKRSESSRNADVKL) and 352 to 367 (RSPEQEKEKKKIRPEP). Positions 428-455 (PKEEGEHVMVVLGKYRGMVGKILHRDKQ) constitute a KOW 2 domain.

It belongs to the MOS2 family. Component of the minor spliceosome, which splices U12-type introns.

It is found in the nucleus. In terms of biological role, RNA-binding protein involved in pre-mRNA splicing. The chain is G-patch domain and KOW motifs-containing protein (gpkow) from Xenopus laevis (African clawed frog).